We begin with the raw amino-acid sequence, 304 residues long: Olfactory receptor 4K13 (304 aa).

At 1 to 25 (MERANHSVVSEFILLGLSKSQNLQI) the chain is on the extracellular side. N5 carries an N-linked (GlcNAc...) asparagine glycan. Residues 26–49 (LFFLGFSVVFVGIVLGNLLILVTV) traverse the membrane as a helical segment. Residues 50–57 (TFDSLLHT) lie on the Cytoplasmic side of the membrane. Residues 58 to 79 (PMYFLLSNLSCIDMILASFATP) form a helical membrane-spanning segment. The Extracellular segment spans residues 80–100 (KMIVDFLRERKTISWWGCYSQ). A disulfide bridge connects residues C97 and C189. Residues 101–120 (MFFMHLLGGSEMMLLVAMAI) form a helical membrane-spanning segment. Topologically, residues 121–139 (DRYVAICKPLHYMTIMSPR) are cytoplasmic. The chain crosses the membrane as a helical span at residues 140–158 (VLTGLLLSSYAVGFVHSSS). Topologically, residues 159-195 (QMAFMLTLPFCGPNVIDSFFCDLPLVIKLACKDTYIL) are extracellular. The helical transmembrane segment at 196–219 (QLLVIADSGLLSLVCFLLLLVSYG) threads the bilayer. Residues 220-235 (VIIFSVRYRAASRSSK) are Cytoplasmic-facing. A helical membrane pass occupies residues 236–258 (AFSTLSAHITVVTLFFAPCVFIY). Topologically, residues 259–269 (VWPFSRYSVDK) are extracellular. Residues 270–289 (ILSVFYTIFTPLLNPIIYTL) form a helical membrane-spanning segment. Over 290-304 (RNQEVKAAIKKRLCI) the chain is Cytoplasmic.

This sequence belongs to the G-protein coupled receptor 1 family.

The protein resides in the cell membrane. Odorant receptor. This is Olfactory receptor 4K13 (OR4K13) from Homo sapiens (Human).